Reading from the N-terminus, the 289-residue chain is Mas-related G-protein coupled receptor member G (289 aa).

Residues 1-13 (MFSIFNIWGTFNK) are Extracellular-facing. A helical membrane pass occupies residues 14–34 (VLFFLSLTVSLAGLVGNALLL). The Cytoplasmic segment spans residues 35–52 (WHLGLHIKKGPFNTYLLH). A helical membrane pass occupies residues 53 to 73 (LAAADFLFLSCQVGFSIATIV). Over 74 to 78 (SGHED) the chain is Extracellular. The chain crosses the membrane as a helical span at residues 79–99 (TLYFPVTFLWFAVGLWLLAAF). Topologically, residues 100-120 (SVDCCLAYMFPSFCSPNRRPR) are cytoplasmic. A helical transmembrane segment spans residues 121-141 (FTSVVLCLVIWALTMPAVLLP). At 142 to 164 (ANACGLLKNGMSLLVCLKYHWTS) the chain is on the extracellular side. The chain crosses the membrane as a helical span at residues 165–185 (VTWLAVLSGMACGASKFLLIF). Residues 186-199 (GNCCSSQPPPKFCK) are Cytoplasmic-facing. The helical transmembrane segment at 200–220 (LAQCSGILLFFCRLPLVVYWC) threads the bilayer. Over 221–222 (LR) the chain is Extracellular. A helical transmembrane segment spans residues 223 to 243 (PVLKFLLPFFFPLATLLACID). Over 244–289 (SSAKPLLYYMKGRQLRKDPLQVALNRALGEESQSGLGGLSLPMHQV) the chain is Cytoplasmic.

This sequence belongs to the G-protein coupled receptor 1 family. Mas subfamily.

The protein localises to the cell membrane. Functionally, orphan receptor. May regulate nociceptor function and/or development, including the sensation or modulation of pain. The polypeptide is Mas-related G-protein coupled receptor member G (Mrgprg) (Mus musculus (Mouse)).